The following is a 74-amino-acid chain: Consomatin Gh1 (74 aa).

The N-terminal stretch at 1-22 (MQTACWVMVMMMVWITAPLSEG) is a signal peptide. The propeptide occupies 23-57 (GKLNDVIRGLVPDDVTPQLILRSLFFHRPSDSVVR). Residues Cys65 and Cys70 are joined by a disulfide bond. Trp67 carries the D-tryptophan modification. 4-hydroxyproline occurs at positions 71, 72, and 74.

The protein belongs to the conotoxin C superfamily. Consomatin family. As to expression, expressed by the venom duct.

The protein localises to the secreted. Its function is as follows. Moderately activates human somatostatin receptors (SSTR) with a preferential activation of SSTR1 and SSTR4. In vivo, does not cause behavioral changes in mice within a few minutes of intracranial injection, but causes a progressive loss of movement thereafter. Four to five hours after injection, mice recover, even with the highest dose tested. Shows antinociception and antihyperalgesia activities in two mouse models of acute pain, most probably by acting outside the central nervous system. In Conus grahami (Cone snail), this protein is Consomatin Gh1.